The primary structure comprises 129 residues: Fluoride-specific ion channel FluC 2 (129 aa).

Helical transmembrane passes span 4–24 (LDVM…WWIG), 39–59 (TFLI…LFGV), 65–85 (YGTM…TTFS), and 100–120 (GGLA…AAWL). Positions 79 and 82 each coordinate Na(+).

It belongs to the fluoride channel Fluc/FEX (TC 1.A.43) family.

It is found in the cell inner membrane. It carries out the reaction fluoride(in) = fluoride(out). With respect to regulation, na(+) is not transported, but it plays an essential structural role and its presence is essential for fluoride channel function. Its function is as follows. Fluoride-specific ion channel. Important for reducing fluoride concentration in the cell, thus reducing its toxicity. In Brucella suis biovar 1 (strain 1330), this protein is Fluoride-specific ion channel FluC 2.